Consider the following 2475-residue polypeptide: Non-reducing polyketide synthase prhL (2475 aa).

Residues 14 to 253 form an N-terminal acylcarrier protein transacylase domain (SAT) region; it reads VLFGSKYSEI…HHADHLSAAQ (240 aa). The Ketosynthase family 3 (KS3) domain occupies 384–800; the sequence is SIPIAVTGLA…GSNAAIVLKE (417 aa). Active-site for beta-ketoacyl synthase activity residues include C549, H684, and H723. The malonyl-CoA:ACP transacylase (MAT) domain stretch occupies residues 910-1212; that stretch reads LCFGGQTGNK…CPMDLSGPQA (303 aa). S997 acts as the For acyl/malonyl transferase activity in catalysis. The segment at 1279 to 1407 is N-terminal hotdog fold; that stretch reads EGLKLVQLLK…GTISLSPGAN (129 aa). Residues 1279–1586 enclose the PKS/mFAS DH domain; that stretch reads EGLKLVQLLK…FTSVSIQSLR (308 aa). Positions 1282-1585 are product template (PT) domain; sequence KLVQLLKNEG…TFTSVSIQSL (304 aa). Catalysis depends on H1312, which acts as the Proton acceptor; for dehydratase activity. The segment at 1435–1586 is C-terminal hotdog fold; sequence SSSGLKRSTV…FTSVSIQSLR (152 aa). The active-site Proton donor; for dehydratase activity is the D1493. One can recognise a Carrier domain in the interval 1626 to 1703; sequence SSNGDDLRTV…ALVQRIFPGR (78 aa). An O-(pantetheine 4'-phosphoryl)serine modification is found at S1663. The methyltransferase (CMeT) domain stretch occupies residues 1865–2098; that stretch reads HHTSEHKLLH…GFNWVDWTDN (234 aa). The tract at residues 2127–2475 is thioesterase (TE) domain; the sequence is SDIHEETVVY…YEFLRSHVRL (349 aa). Active-site for thioesterase activity residues include S2250 and D2412.

The enzyme catalyses 3 malonyl-CoA + acetyl-CoA + 2 S-adenosyl-L-methionine = 3,5-dimethylorsellinate + 2 S-adenosyl-L-homocysteine + 3 CO2 + 4 CoA. It functions in the pathway secondary metabolite biosynthesis; terpenoid biosynthesis. Its function is as follows. Non-reducing polyketide synthase; part of the gene cluster that mediates the biosynthesis of paraherquonin, a meroterpenoid with a unique, highly congested hexacyclic molecular architecture. The first step of the pathway is the synthesis of 3,5-dimethylorsellinic acid (DMOA) by the polyketide synthase prhL. Synthesis of DMOA is followed by farnesylation by the prenyltransferase prhE, methylesterification by the methyl-transferase prhM, epoxidation of the prenyl chain by the flavin-dependent monooxygenase prhF, and cyclization of the farnesyl moiety by the terpene cyclase prhH, to yield the tetracyclic intermediate, protoaustinoid A. The short chain dehydrogenase prhI then oxidizes the C-3 alcohol group of the terpene cyclase product to transform protoaustinoid A into protoaustinoid B. The FAD-binding monooxygenase prhJ catalyzes the oxidation of protoaustinoid B into preaustinoid A which is further oxidized into preaustinoid A1 by FAD-binding monooxygenase phrK. Finally, prhA leads to berkeleydione via the berkeleyone B intermediate. PrhA is a multifunctional dioxygenase that first desaturates at C5-C6 to form berkeleyone B, followed by rearrangement of the A/B-ring to form the cycloheptadiene moiety in berkeleydione. Berkeleydione serves as the key intermediate for the biosynthesis of paraherquonin as well as many other meroterpenoids. The cytochrome P450 monooxygenases prhB, prhD, and prhN, as well as the isomerase prhC, are probably involved in the late stage of paraherquonin biosynthesis, after the production of berkeleydione. Especially prhC might be a multifunctional enzyme that catalyzes the D-ring expansion via intramolecular methoxy rearrangement, as well as the hydrolysis of the expanded D-ring. The polypeptide is Non-reducing polyketide synthase prhL (Penicillium brasilianum).